The primary structure comprises 420 residues: Exodeoxyribonuclease 7 large subunit (420 aa).

This sequence belongs to the XseA family. In terms of assembly, heterooligomer composed of large and small subunits.

It localises to the cytoplasm. It carries out the reaction Exonucleolytic cleavage in either 5'- to 3'- or 3'- to 5'-direction to yield nucleoside 5'-phosphates.. Functionally, bidirectionally degrades single-stranded DNA into large acid-insoluble oligonucleotides, which are then degraded further into small acid-soluble oligonucleotides. This chain is Exodeoxyribonuclease 7 large subunit, found in Helicobacter acinonychis (strain Sheeba).